The following is a 294-amino-acid chain: 4-hydroxy-tetrahydrodipicolinate synthase (294 aa).

Thr-47 is a binding site for pyruvate. The active-site Proton donor/acceptor is Tyr-136. Lys-164 functions as the Schiff-base intermediate with substrate in the catalytic mechanism. Val-206 is a pyruvate binding site.

It belongs to the DapA family. Homotetramer; dimer of dimers.

It is found in the cytoplasm. It catalyses the reaction L-aspartate 4-semialdehyde + pyruvate = (2S,4S)-4-hydroxy-2,3,4,5-tetrahydrodipicolinate + H2O + H(+). Its pathway is amino-acid biosynthesis; L-lysine biosynthesis via DAP pathway; (S)-tetrahydrodipicolinate from L-aspartate: step 3/4. In terms of biological role, catalyzes the condensation of (S)-aspartate-beta-semialdehyde [(S)-ASA] and pyruvate to 4-hydroxy-tetrahydrodipicolinate (HTPA). The polypeptide is 4-hydroxy-tetrahydrodipicolinate synthase (Acaryochloris marina (strain MBIC 11017)).